The following is a 398-amino-acid chain: Putative F-box protein At4g17780 (398 aa).

Residues 8–55 (PSSIYIVADLLEDIFLRLPLKSILISKSVSKRWRSILESKTFVERRMS) form the F-box domain.

The polypeptide is Putative F-box protein At4g17780 (Arabidopsis thaliana (Mouse-ear cress)).